A 1092-amino-acid chain; its full sequence is Myelin regulatory factor (1092 aa).

At 1-730 the chain is on the cytoplasmic side; that stretch reads MDVEDENETL…CVSQRFLQAT (730 aa). Disordered stretches follow at residues 145 to 168, 187 to 210, and 258 to 282; these read SYAAGTLPDSPPDSGSEAYSPQQL, PPSRLEHPPPPHLQGPLPPHSIHQ, and QQHGAELPVHPSKKRKHSDSPTNTL. Residues 196–205 show a composition bias toward pro residues; it reads PPHLQGPLPP. The NDT80 DNA-binding region spans 246–507; sequence AQQSQMLHQL…SNPGQFESDS (262 aa). The region spanning 553 to 662 is the Peptidase S74 domain; it reads SDIRAKESVE…KLTDNLETRI (110 aa). Positions 646-677 form a coiled coil; the sequence is GAVKELCKLTDNLETRIDELERWSHKLAKLRR. Residues 681 to 695 show a composition bias toward polar residues; the sequence is MKSTNSHTGSSQFSR. Positions 681 to 714 are disordered; sequence MKSTNSHTGSSQFSRAGSVPYKQRPPKVMGKTVP. Residues 731-751 form a helical membrane-spanning segment; that stretch reads IIALVIIMAFSVISMTTLYVL. Over 752–1092 the chain is Lumenal; the sequence is NLRSEDDMLG…YYFRFYRLCD (341 aa). Disordered regions lie at residues 798–817 and 849–945; these read TTQLKGNTTPPPKITKSPDW and ITRK…DSRY. Polar residues-rich tracts occupy residues 849–867 and 928–945; these read ITRKTSAASAETISQTDPA and TPITPMDRTQGNSNDSRY. N941, N961, N974, and N996 each carry an N-linked (GlcNAc...) asparagine glycan.

Belongs to the MRF family. As to quaternary structure, homotrimer. In terms of processing, follows autocatalytic cleavage via the peptidase S74 domain. Autoprocessing is apparently constitutive and is essential for transcriptional activity.

Its subcellular location is the endoplasmic reticulum membrane. The protein resides in the nucleus. The protein localises to the cytoplasm. Constitutes a precursor of the transcription factor. Mediates the autocatalytic cleavage that releases the Myelin regulatory factor, N-terminal component that specifically activates transcription of central nervous system (CNS) myelin genes. In terms of biological role, membrane-bound part that has no transcription factor activity and remains attached to the endoplasmic reticulum membrane following cleavage. Its function is as follows. Transcription factor that specifically activates expression of myelin genes during oligodendrocyte (OL) maturation, thereby playing a central role in oligodendrocyte maturation and CNS myelination. The chain is Myelin regulatory factor (myrf) from Xenopus laevis (African clawed frog).